We begin with the raw amino-acid sequence, 301 residues long: MLMNFGGSYDAYINNFQGTFLAEWMLDHPSVPYIAGVMYLILVLYVPKSIMASQPPLNLRAANIVWNLFLTLFSMCGAYYTVPYLVKAFMNPEIVMAASGIKLDANTSPIITHSGFYTTTCALADSFYFNGDVGFWVALFALSKIPEMIDTAFLVFQKKPVIFLHWYHHLTVMLFCWFAYVQKISSGLWFASMNYSVHSIMYLYYFVCACGHRRLVRPFAPIITFVQIFQMVVGTIVVCYTYTVKHVLGRSCTVTDFSLHTGLVMYVSYLLLFSQLFYRSYLSPRDKASIPHVAAEIKKKE.

Transmembrane regions (helical) follow at residues 31–51 (VPYIAGVMYLILVLYVPKSIM), 64–84 (IVWNLFLTLFSMCGAYYTVPY), 122–142 (ALADSFYFNGDVGFWVALFAL), 161–181 (VIFLHWYHHLTVMLFCWFAYV), 187–207 (GLWFASMNYSVHSIMYLYYFV), 219–239 (FAPIITFVQIFQMVVGTIVVC), and 257–277 (FSLHTGLVMYVSYLLLFSQLF). The HxxHH motif motif lies at 165–169 (HWYHH). His168 (nucleophile) is an active-site residue.

This sequence belongs to the ELO family.

It is found in the endoplasmic reticulum membrane. The enzyme catalyses an acyl-CoA + malonyl-CoA + H(+) = a 3-oxoacyl-CoA + CO2 + CoA. It participates in lipid metabolism; fatty acid biosynthesis. Functionally, involved in the synthesis of fatty acids. Elongates C14 fatty acids to C18. This chain is Fatty acid elongase 3, found in Trypanosoma brucei brucei (strain 927/4 GUTat10.1).